The primary structure comprises 1194 residues: F-box only protein 38 (1194 aa).

Residues M30–D75 form the F-box domain. The interval K59 to R119 is interaction with KLF7. 3 short sequence motifs (nuclear export signal) span residues L194–V201, L307–I316, and L451–L460. 4 disordered regions span residues A487 to D529, E577 to S776, R793 to S879, and K896 to D915. Residues N493 to H510 are compositionally biased toward low complexity. At T592 the chain carries Phosphothreonine. Phosphoserine occurs at positions 599, 601, and 607. The span at S599 to E609 shows a compositional bias: acidic residues. Basic and acidic residues-rich tracts occupy residues R622 to G631 and I683 to D701. Low complexity predominate over residues S705–S728. Phosphoserine occurs at positions 742 and 746. Positions E764–A774 are enriched in acidic residues. Residues R793–S804 show a composition bias toward basic and acidic residues. Over residues S855–E867 the composition is skewed to polar residues. Over residues K896–T906 the composition is skewed to basic residues. Positions K902–R905 match the Nuclear localization signal motif.

Part of the SCF (SKP1-CUL1-F-box) E3 ubiquitin-protein ligase complex SCF(FBXO38) composed of CUL1, SKP1, RBX1 and FBXO38. Interacts with KLF7. Interacts with PDCD1/PD-1. Expressed at high levels in embryo (developing brain, spinal cord, branchial arms and limbs). Widely expressed at low levels in adult tissues, with highest expression in testis. Expressed in postmeiotic spermatids.

Its subcellular location is the cytoplasm. It is found in the cytosol. It localises to the nucleus. The protein operates within protein modification; protein ubiquitination. In terms of biological role, substrate recognition component of a SCF (SKP1-CUL1-F-box protein) E3 ubiquitin-protein ligase complex which mediates the ubiquitination and subsequent proteasomal degradation of PDCD1/PD-1, thereby regulating T-cells-mediated immunity. Required for anti-tumor activity of T-cells by promoting the degradation of PDCD1/PD-1; the PDCD1-mediated inhibitory pathway being exploited by tumors to attenuate anti-tumor immunity and facilitate tumor survival. May indirectly stimulate the activity of transcription factor KLF7, a regulator of neuronal differentiation, without promoting KLF7 ubiquitination. In Mus musculus (Mouse), this protein is F-box only protein 38.